The sequence spans 451 residues: MRECISIHVGQAGVQIGNACWELYCLEHGIQPDGQMPSDKTIGGGDDSFNTFFSETGAGKHVPRAVFVDLEPTVIDEVRTGTYRQLFHPEQLITGKEDAANNYARGHYTIGKEIIDLVLDRIRKLADQCTGLQGFLVFHSFGGGTGSGFTSLLMERLSVDYGKKSKLEFSIYPAPQVSTAVVEPYNSILTTHTTLEHSDCAFMVDNEAIYDICRRNLDIERPTYTNLNRLISQIVSSITASLRFDGALNVDLTEFQTNLVPYPRIHFPLATYAPVISAEKAYHEQLSVAEITNACFEPANQMVKCDPRHGKYMACCLLYRGDVVPKDVNAAIATIKTKRSIQFVDWCPTGFKVGINYQPPTVVPGGDLAKVQRAVCMLSNTTAIAEAWARLDHKFDLMYAKRAFVHWYVGEGMEEGEFSEAREDMAALEKDYEEVGVDSVEGEGEEEGEEY.

An MREC motif motif is present at residues 1–4 (MREC). Residues Gly-10, Gln-11, Ala-12, and Gln-15 each coordinate GTP. The residue at position 40 (Lys-40) is an N6,N6,N6-trimethyllysine; alternate. N6-acetyllysine; alternate is present on Lys-40. The residue at position 48 (Ser-48) is a Phosphoserine. Residues Glu-71, Ala-99, Ser-140, Gly-143, Gly-144, Thr-145, Gly-146, Thr-179, Glu-183, Asn-206, Tyr-224, and Asn-228 each contribute to the GTP site. Glu-71 contributes to the Mg(2+) binding site. Ser-232 bears the Phosphoserine mark. A GTP-binding site is contributed by Leu-252. Glu-254 is a catalytic residue. Residue Tyr-282 is modified to 3'-nitrotyrosine. A Glycyl lysine isopeptide (Lys-Gly) (interchain with G-Cter in ubiquitin) cross-link involves residue Lys-326. At Arg-339 the chain carries Omega-N-methylarginine. A Glycyl lysine isopeptide (Lys-Gly) (interchain with G-Cter in ubiquitin) cross-link involves residue Lys-370. The interval 432–451 (YEEVGVDSVEGEGEEEGEEY) is disordered. Residue Ser-439 is modified to Phosphoserine. 5-glutamyl polyglutamate occurs at positions 443 and 445. Tyr-451 carries the post-translational modification 3'-nitrotyrosine.

This sequence belongs to the tubulin family. Heterodimer of alpha- and beta-tubulin. A typical microtubule is a hollow water-filled tube with an outer diameter of 25 nm and an inner diameter of 15 nM. Alpha-beta heterodimers associate head-to-tail to form protofilaments running lengthwise along the microtubule wall with the beta-tubulin subunit facing the microtubule plus end conferring a structural polarity. Microtubules usually have 13 protofilaments but different protofilament numbers can be found in some organisms and specialized cells. Interacts with gamma-tubulin; the interaction allows microtubules to nucleate from the gamma-tubulin ring complex (gTuRC). Nascent microtubule interacts (via alpha-tubulin MREC motif) with TTC5/STRAP; this interaction may result in tubulin mRNA-targeted degradation. Component of sperm flagellar doublet microtubules. Requires Mg(2+) as cofactor. In terms of processing, some glutamate residues at the C-terminus are polyglutamylated, resulting in polyglutamate chains on the gamma-carboxyl group. Polyglutamylation plays a key role in microtubule severing by spastin (SPAST). SPAST preferentially recognizes and acts on microtubules decorated with short polyglutamate tails: severing activity by SPAST increases as the number of glutamates per tubulin rises from one to eight, but decreases beyond this glutamylation threshold. Glutamylation is also involved in cilia motility. Post-translationally, some glutamate residues at the C-terminus are monoglycylated but not polyglycylated due to the absence of functional TTLL10 in human. Monoglycylation is mainly limited to tubulin incorporated into cilia and flagella axonemes, which is required for their stability and maintenance. Flagella glycylation controls sperm motility. Both polyglutamylation and monoglycylation can coexist on the same protein on adjacent residues, and lowering glycylation levels increases polyglutamylation, and reciprocally. Acetylation of alpha chains at Lys-40 is located inside the microtubule lumen. This modification has been correlated with increased microtubule stability, intracellular transport and ciliary assembly. In terms of processing, methylation of alpha chains at Lys-40 is found in mitotic microtubules and is required for normal mitosis and cytokinesis contributing to genomic stability. Post-translationally, nitration of Tyr-451 is irreversible and interferes with normal dynein intracellular distribution. Undergoes a tyrosination/detyrosination cycle, the cyclic removal and re-addition of a C-terminal tyrosine residue by the enzymes tubulin tyrosine carboxypeptidase (MATCAP1/KIAA0895L, VASH1 or VASH2) and tubulin tyrosine ligase (TTL), respectively. In terms of processing, tyrosination promotes microtubule interaction with CAP-Gly domain-containing proteins such as CLIP1, CLIP2 and DCTN1. Tyrosination regulates the initiation of dynein-dynactin motility via interaction with DCTN1, which brings the dynein-dynactin complex into contact with microtubules. In neurons, tyrosinated tubulins mediate the initiation of retrograde vesicle transport. Post-translationally, detyrosination is involved in metaphase plate congression by guiding chromosomes during mitosis: detyrosination promotes interaction with CENPE, promoting pole-proximal transport of chromosomes toward the equator. Detyrosination increases microtubules-dependent mechanotransduction in dystrophic cardiac and skeletal muscle. In cardiomyocytes, detyrosinated microtubules are required to resist to contractile compression during contraction: detyrosination promotes association with desmin (DES) at force-generating sarcomeres, leading to buckled microtubules and mechanical resistance to contraction.

Its subcellular location is the cytoplasm. It is found in the cytoskeleton. It catalyses the reaction GTP + H2O = GDP + phosphate + H(+). In terms of biological role, tubulin is the major constituent of microtubules, protein filaments consisting of alpha- and beta-tubulin heterodimers. Microtubules grow by the addition of GTP-tubulin dimers to the microtubule end, where a stabilizing cap forms. Below the cap, tubulin dimers are in GDP-bound state, owing to GTPase activity of alpha-tubulin. The protein is Tubulin alpha-1B chain (TUBA1B) of Homo sapiens (Human).